The primary structure comprises 601 residues: ATP-dependent lipid A-core flippase (601 aa).

The ABC transmembrane type-1 domain maps to 28-328 (LLSVCGLIVY…LTRVNAEFQR (301 aa)). A run of 6 helical transmembrane segments spans residues 32-52 (CGLIVYGLVDAAFISFIGPFI), 81-101 (VLLMAPIVVILMFSLRGFANF), 160-180 (ALISIVRDGVTVIGMLGLMFY), 183-203 (WKLSLCILVIGPIMGLVITIV), 267-287 (AVSQPLIMVIGSFALAFVLYA), and 296-316 (DLTAGTFATILGAMMAMLQPI). The 238-residue stretch at 360–597 (LRFDNVSFSY…GGMYAKLYQM (238 aa)) folds into the ABC transporter domain. 394 to 401 (GRSGSGKS) is a binding site for ATP.

Belongs to the ABC transporter superfamily. Lipid exporter (TC 3.A.1.106) family. As to quaternary structure, homodimer.

Its subcellular location is the cell inner membrane. The catalysed reaction is ATP + H2O + lipid A-core oligosaccharideSide 1 = ADP + phosphate + lipid A-core oligosaccharideSide 2.. Functionally, involved in lipopolysaccharide (LPS) biosynthesis. Translocates lipid A-core from the inner to the outer leaflet of the inner membrane. Transmembrane domains (TMD) form a pore in the inner membrane and the ATP-binding domain (NBD) is responsible for energy generation. This is ATP-dependent lipid A-core flippase from Shewanella sp. (strain MR-4).